Here is a 450-residue protein sequence, read N- to C-terminus: MTLRNASLTAVAALTVALAGGAVAQDASTAPGTTAPAGSSYHTNEAAPAAADTAPAAEAADEPAAEEAEAGEAEVTEEPAATETPAEEPAADEPAATEEPDAEAEPAAEEAQATTEEAPAEEPAAEEPAAEEPAEEPAADAPAEEAAAEEAPAEPEAAAEEPAAEEPEATEEEAPAEEAAAEEAPAEEVVEDEAAADHGDAAAQEAGDSHAAAHIEDISFSFEGPFGKFDQHQLQRGLQVYTEVCSACHGLRYVPLRTLADEGGPQLPEDQVRAYAANFDITDPETEEDRPRVPTDHFPTVSGEGMGPDLSLMAKARAGFHGPYGTGLSQLFNGIGGPEYIHAVLTGYDGEEKEEAGAVLYHNAAFAGNWIQMAAPLSDDQVTYEDGTPATVDQMATDVAAFLMWTAEPKMMDRKQVGFVSVIFLIVLAALLYLTNKKLWQPIKHPRKPE.

Positions 1 to 21 (MTLRNASLTAVAALTVALAGG) are cleaved as a signal peptide. Low complexity predominate over residues 24-58 (AQDASTAPGTTAPAGSSYHTNEAAPAAADTAPAAE). A disordered region spans residues 24-210 (AQDASTAPGT…AAAQEAGDSH (187 aa)). Acidic residues-rich tracts occupy residues 59–77 (AADE…EVTE), 85–108 (PAEE…EPAA), and 118–194 (APAE…EDEA). Residues cysteine 245, cysteine 248, and histidine 249 each coordinate heme c. The interval 284–305 (PETEEDRPRVPTDHFPTVSGEG) is disordered. Methionine 373 is a heme c binding site. The chain crosses the membrane as a helical span at residues 421-435 (SVIFLIVLAALLYLT).

As to quaternary structure, the main subunits of complex b-c1 are: cytochrome b, cytochrome c1 and the Rieske protein. In terms of processing, binds 1 heme c group covalently per subunit.

The protein localises to the cell membrane. Functionally, component of the ubiquinol-cytochrome c reductase complex (complex III or cytochrome b-c1 complex), which is a respiratory chain that generates an electrochemical potential coupled to ATP synthesis. c1 functions as an electron donor to cytochrome c. The chain is Cytochrome c1 (petC) from Paracoccus denitrificans.